Reading from the N-terminus, the 616-residue chain is Chaperone protein HscA (616 aa).

This sequence belongs to the heat shock protein 70 family.

Chaperone involved in the maturation of iron-sulfur cluster-containing proteins. Has a low intrinsic ATPase activity which is markedly stimulated by HscB. Involved in the maturation of IscU. In Pectobacterium atrosepticum (strain SCRI 1043 / ATCC BAA-672) (Erwinia carotovora subsp. atroseptica), this protein is Chaperone protein HscA.